A 527-amino-acid polypeptide reads, in one-letter code: Benzoate--CoA ligase (527 aa).

The protein belongs to the ATP-dependent AMP-binding enzyme family. Benzoate-CoA ligase subfamily. Monomer.

The enzyme catalyses benzoate + ATP + CoA = benzoyl-CoA + AMP + diphosphate. In terms of biological role, catalyzes the ligation of benzoate and CoA to form benzoyl-CoA at the expense of ATP. The enzyme also ligates 2-aminobenzoate and CoA. The enzyme shows activity toward a number of benzoate derivatives. The polypeptide is Benzoate--CoA ligase (bclA) (Thauera aromatica).